Consider the following 315-residue polypeptide: G-box-binding factor 1 (315 aa).

Disordered stretches follow at residues methionine 1–serine 56 and methionine 93–leucine 268. Pro residues predominate over residues proline 46 to serine 56. Composition is skewed to polar residues over residues glycine 133–glycine 164 and alanine 178–isoleucine 187. Residues glutamate 222 to isoleucine 285 enclose the bZIP domain. The interval lysine 224–lysine 243 is basic motif. Residues glutamine 249 to glutamine 262 show a composition bias toward polar residues. The segment at leucine 250 to isoleucine 285 is leucine-zipper.

The protein belongs to the bZIP family. In terms of assembly, monomer and heterodimers with BZIP16 and BZIP68. Interacts with GIP1. Phosphorylated by CK2. Found in both light and dark grown leaves.

Its subcellular location is the nucleus. Functionally, binds to the G-box motif (5'-CCACGTGG-3') of the rbcS-1A gene promoter. G-box and G-box-like motifs are cis-acting elements defined in promoters of certain plant genes which are regulated by such diverse stimuli as light-induction or hormone control. Binds to the G-box motif 5'-CACGTG-3' of LHCB2.4 (At3g27690) promoter. May act as transcriptional activator in light-regulated expression of LHCB2.4. Probably binds DNA as monomer. DNA-binding activity is redox-dependent. The polypeptide is G-box-binding factor 1 (GBF1) (Arabidopsis thaliana (Mouse-ear cress)).